The primary structure comprises 327 residues: Phenylalanine--tRNA ligase alpha subunit (327 aa).

Residue Glu-252 coordinates Mg(2+).

Belongs to the class-II aminoacyl-tRNA synthetase family. Phe-tRNA synthetase alpha subunit type 1 subfamily. Tetramer of two alpha and two beta subunits. Mg(2+) is required as a cofactor.

The protein resides in the cytoplasm. It catalyses the reaction tRNA(Phe) + L-phenylalanine + ATP = L-phenylalanyl-tRNA(Phe) + AMP + diphosphate + H(+). The polypeptide is Phenylalanine--tRNA ligase alpha subunit (Edwardsiella ictaluri (strain 93-146)).